The following is a 142-amino-acid chain: Gene 46 protein (142 aa).

Positions 82–101 (KALAQVKPETGPSRPNRKKL) are disordered.

The polypeptide is Gene 46 protein (46) (Mycobacterium (Mycobacteriophage L5)).